Here is a 487-residue protein sequence, read N- to C-terminus: MVKQQDWSVTTCVLLFLFLASQIHCRSGIHVSKRLEGSKQGDGKSGDTSFNVLRRVLSPKEKDLIKKLPGQPSGVSFRQYGGYVPVNEPSSRFLYYYFVEAIKPNTSTPLVIWFNGGPACSSLGGAFLELGPFRVHSGGRKLFRNPYSWNNEANVLFLESPVTTGFSYSSNPIDLEELGEKGDKATAEDNYIFLMNWLERFPEYKGRDIYIAGQSYAGHYVPQLAQIIIHRNKKTLVNLRGILIGNPSLLTSIQDPYGYEFMLSHGLMSQQQMDNYNQFCLRDDLYDNDKCALSVKTIDDAKKHLDTYNIYAPVCLNSTLSRISKKCTTVLEVDPCSKDYLKAYLNRKKVQKAIHANTTKLPYEWTSCNNELTENWSENDRDTPMIPILHELMGEGVRVMIYNGDVDLEIPFASTLAVVKEMNLTVVKEFRPWFTGGQLGGFTEDYKGNLTFVTVKGAGHSVPTDQPIHALNIFTSFIRNTPLPHTA.

The N-terminal stretch at Met1–Gly28 is a signal peptide. Residue Asn105 is glycosylated (N-linked (GlcNAc...) asparagine). 3 cysteine pairs are disulfide-bonded: Cys120–Cys368, Cys280–Cys291, and Cys315–Cys336. Ser215 is a catalytic residue. 3 N-linked (GlcNAc...) asparagine glycosylation sites follow: Asn317, Asn357, and Asn375. The active site involves Asp407. Residues Asn423 and Asn449 are each glycosylated (N-linked (GlcNAc...) asparagine). The active site involves His460.

This sequence belongs to the peptidase S10 family. As to expression, expressed in seedlings, roots, leaves, stems, flowers and siliques.

The protein resides in the secreted. In terms of biological role, probable carboxypeptidase. The sequence is that of Serine carboxypeptidase-like 37 (SCPL37) from Arabidopsis thaliana (Mouse-ear cress).